The primary structure comprises 759 residues: Fidgetin (759 aa).

Disordered stretches follow at residues 89–111, 200–237, 258–293, and 337–429; these read SNYS…PWQP, SQAT…PGYN, VGSG…VPGY, and SYGQ…VMSE. Composition is skewed to pro residues over residues 221-232 and 266-289; these read QPPPPPPPPPAL and GAPP…PPTT. Composition is skewed to polar residues over residues 337 to 347 and 382 to 418; these read SYGQQRSTQSP and LMPS…SSES. Position 400 is a phosphothreonine (T400). Residues A489 and 529-534 contribute to the ATP site; that span reads GTGKTL.

The protein belongs to the AAA ATPase family. Interacts with AKAP8 (via C-terminus). In terms of tissue distribution, widely expressed.

It localises to the nucleus matrix. The protein localises to the cytoplasm. Its subcellular location is the cytoskeleton. The protein resides in the microtubule organizing center. It is found in the centrosome. Functionally, ATP-dependent microtubule severing protein. Severs microtubules along their length and depolymerizes their ends, primarily the minus-end, suppressing microtubule growth from and attachment to centrosomes. Microtubule severing may promote rapid reorganization of cellular microtubule arrays and the release of microtubules from the centrosome following nucleation. Microtubule release from the mitotic spindle poles may allow depolymerization of the microtubule end proximal to the spindle pole, leading to poleward microtubule flux and poleward motion of chromosome. The chain is Fidgetin (Fign) from Mus musculus (Mouse).